The primary structure comprises 461 residues: Alpha-L-fucosidase (461 aa).

The signal sequence occupies residues 1–18 (MKMIIIFFILLILNLIKS).

Belongs to the glycosyl hydrolase 29 family.

It catalyses the reaction an alpha-L-fucoside + H2O = L-fucose + an alcohol. Alpha-L-fucosidase is responsible for hydrolyzing the alpha-1,6-linked fucose joined to the reducing-end N-acetylglucosamine of the carbohydrate moieties of glycoproteins. The polypeptide is Alpha-L-fucosidase (alfA) (Dictyostelium discoideum (Social amoeba)).